The chain runs to 199 residues: Small ribosomal subunit protein uS4 (199 aa).

Positions Ser91–Leu154 constitute an S4 RNA-binding domain.

It belongs to the universal ribosomal protein uS4 family. As to quaternary structure, part of the 30S ribosomal subunit. Contacts protein S5. The interaction surface between S4 and S5 is involved in control of translational fidelity.

One of the primary rRNA binding proteins, it binds directly to 16S rRNA where it nucleates assembly of the body of the 30S subunit. Its function is as follows. With S5 and S12 plays an important role in translational accuracy. The chain is Small ribosomal subunit protein uS4 from Phytoplasma mali (strain AT).